We begin with the raw amino-acid sequence, 408 residues long: LL-diaminopimelate aminotransferase (408 aa).

Substrate-binding residues include tyrosine 15 and glycine 42. Pyridoxal 5'-phosphate is bound by residues tyrosine 72, 108 to 109, tyrosine 132, asparagine 187, tyrosine 218, and 246 to 248; these read SK and SFS. Residues lysine 109, tyrosine 132, and asparagine 187 each contribute to the substrate site. Lysine 249 bears the N6-(pyridoxal phosphate)lysine mark. Residues arginine 257 and asparagine 292 each coordinate pyridoxal 5'-phosphate. Asparagine 292 and arginine 388 together coordinate substrate.

Belongs to the class-I pyridoxal-phosphate-dependent aminotransferase family. LL-diaminopimelate aminotransferase subfamily. As to quaternary structure, homodimer. Pyridoxal 5'-phosphate serves as cofactor.

The enzyme catalyses (2S,6S)-2,6-diaminopimelate + 2-oxoglutarate = (S)-2,3,4,5-tetrahydrodipicolinate + L-glutamate + H2O + H(+). Its pathway is amino-acid biosynthesis; L-lysine biosynthesis via DAP pathway; LL-2,6-diaminopimelate from (S)-tetrahydrodipicolinate (aminotransferase route): step 1/1. Functionally, involved in the synthesis of meso-diaminopimelate (m-DAP or DL-DAP), required for both lysine and peptidoglycan biosynthesis. Catalyzes the direct conversion of tetrahydrodipicolinate to LL-diaminopimelate. Is also able to catalyze the reverse reaction in vitro, i.e. the transamination of LL-diaminopimelate with 2-oxoglutarate to produce tetrahydrodipicolinate and glutamate. Cannot use m-DAP, lysine or ornithine as the amino-group donor, when using 2-oxoglutarate as the amino-group acceptor. Cannot use pyruvate, indole 3-pyruvate, oxaloacetate or phenyl pyruvate as the amino-group acceptor, when using LL-DAP as the amino-group donor. The polypeptide is LL-diaminopimelate aminotransferase (Leptospira interrogans serogroup Icterohaemorrhagiae serovar copenhageni (strain Fiocruz L1-130)).